The following is a 257-amino-acid chain: Undecaprenyl-diphosphatase (257 aa).

7 consecutive transmembrane segments (helical) span residues 42–62 (YVLF…YMFL), 76–96 (IFHI…LKPI), 103–123 (PQYL…GVYF), 136–156 (CLTI…RSGA), 172–192 (IQFS…LEIW), 209–229 (QFLT…WAVI), and 237–257 (WVYF…YFQM).

It belongs to the UppP family.

It localises to the cell inner membrane. It carries out the reaction di-trans,octa-cis-undecaprenyl diphosphate + H2O = di-trans,octa-cis-undecaprenyl phosphate + phosphate + H(+). In terms of biological role, catalyzes the dephosphorylation of undecaprenyl diphosphate (UPP). Confers resistance to bacitracin. This is Undecaprenyl-diphosphatase from Protochlamydia amoebophila (strain UWE25).